We begin with the raw amino-acid sequence, 467 residues long: ADP-dependent glucose/glucosamine kinase (467 aa).

Residues 10–467 enclose the ADPK domain; it reads RLWKRLYVNA…FVSEFGMRKR (458 aa). Residues aspartate 42, glutamate 96, glycine 120, 120–121, histidine 184, and aspartate 211 each bind D-glucose; that span reads GQ. Glutamate 279 lines the Mg(2+) pocket. ADP is bound at residue asparagine 305. Position 308 (glutamate 308) interacts with Mg(2+). ADP-binding positions include 352-353, valine 440, and glycine 450; that span reads HT. Position 451 (aspartate 451) interacts with D-glucose. Aspartate 451 contributes to the Mg(2+) binding site. Aspartate 451 acts as the Proton acceptor in catalysis.

The protein belongs to the ADP-dependent glucokinase family. Monomer. Mg(2+) serves as cofactor.

It localises to the cytoplasm. The enzyme catalyses D-glucose + ADP = D-glucose 6-phosphate + AMP + H(+). It carries out the reaction D-glucosamine + ADP = D-glucosamine 6-phosphate + AMP + H(+). The protein operates within carbohydrate degradation; glycolysis. Its function is as follows. Catalyzes the ADP-dependent phosphorylation of D-glucose to D-glucose 6-phosphate and glucosamine to glucosamine 6-phosphate. Can also use CDP as the phosphoryl group donor and D-1,5-anhydroglucitol as the phosphoryl group acceptor. The protein is ADP-dependent glucose/glucosamine kinase of Thermococcus litoralis (strain ATCC 51850 / DSM 5473 / JCM 8560 / NS-C).